A 447-amino-acid chain; its full sequence is Phosphoglucosamine mutase (447 aa).

The active-site Phosphoserine intermediate is serine 104. Residues serine 104, aspartate 243, aspartate 245, and aspartate 247 each coordinate Mg(2+). Serine 104 is subject to Phosphoserine.

It belongs to the phosphohexose mutase family. Mg(2+) serves as cofactor. In terms of processing, activated by phosphorylation.

It carries out the reaction alpha-D-glucosamine 1-phosphate = D-glucosamine 6-phosphate. Functionally, catalyzes the conversion of glucosamine-6-phosphate to glucosamine-1-phosphate. The sequence is that of Phosphoglucosamine mutase from Corynebacterium jeikeium (strain K411).